A 158-amino-acid polypeptide reads, in one-letter code: SsrA-binding protein (158 aa).

It belongs to the SmpB family.

The protein localises to the cytoplasm. Its function is as follows. Required for rescue of stalled ribosomes mediated by trans-translation. Binds to transfer-messenger RNA (tmRNA), required for stable association of tmRNA with ribosomes. tmRNA and SmpB together mimic tRNA shape, replacing the anticodon stem-loop with SmpB. tmRNA is encoded by the ssrA gene; the 2 termini fold to resemble tRNA(Ala) and it encodes a 'tag peptide', a short internal open reading frame. During trans-translation Ala-aminoacylated tmRNA acts like a tRNA, entering the A-site of stalled ribosomes, displacing the stalled mRNA. The ribosome then switches to translate the ORF on the tmRNA; the nascent peptide is terminated with the 'tag peptide' encoded by the tmRNA and targeted for degradation. The ribosome is freed to recommence translation, which seems to be the essential function of trans-translation. The protein is SsrA-binding protein of Symbiobacterium thermophilum (strain DSM 24528 / JCM 14929 / IAM 14863 / T).